Consider the following 233-residue polypeptide: 7-cyano-7-deazaguanine synthase (233 aa).

7-17 (CSGGLDSVSLA) lines the ATP pocket. 4 residues coordinate Zn(2+): C185, C193, C196, and C199.

It belongs to the QueC family. Requires Zn(2+) as cofactor.

It carries out the reaction 7-carboxy-7-deazaguanine + NH4(+) + ATP = 7-cyano-7-deazaguanine + ADP + phosphate + H2O + H(+). Its pathway is purine metabolism; 7-cyano-7-deazaguanine biosynthesis. Functionally, catalyzes the ATP-dependent conversion of 7-carboxy-7-deazaguanine (CDG) to 7-cyano-7-deazaguanine (preQ(0)). This Ruegeria sp. (strain TM1040) (Silicibacter sp.) protein is 7-cyano-7-deazaguanine synthase.